Here is a 437-residue protein sequence, read N- to C-terminus: MVNLSRSVALISVFLLPLLSFSFSVDNPTDRRVLVLLDDLSLKSSHSIFFNTLKSRGFDLDFKLAEDSKLALQRYGQYLYDGLIIFAPSTERFGGSLDSKSIADFVDSGRDLILSADTAASDLIRGIATECGVDFDEDSSAMVIDHTSFSVSDVDGDHTLIAADDLVKSDVILGKTKIEAPVLFRGVAHSLNPTNNLVLKVLSASPSAYSANPSSKLSSPPQLTGSSISLVSVMQARNNARVVISGSVQLFSDRLIRSGVQKAGSPNQYEKSGNEQFVTELSKWVFHERGHLKAGNLVHHRVGETDEPAIYRIKDDLEFSVEIYEWSGKSWEPYVANDVQVQFYMMSPYVLKTLSTDKKGLFHTSFKVPDVYGVFQFKVEYEKLGYTTLSLSKQIPVRPYRHNEYERFIPTAYPYYGACFTTMAGFFVFSFVYLYHK.

The signal sequence occupies residues 1 to 24 (MVNLSRSVALISVFLLPLLSFSFS). Over 25-414 (VDNPTDRRVL…YERFIPTAYP (390 aa)) the chain is Lumenal. The chain crosses the membrane as a helical span at residues 415-435 (YYGACFTTMAGFFVFSFVYLY). Over 436–437 (HK) the chain is Cytoplasmic.

Belongs to the DDOST 48 kDa subunit family. Component of the oligosaccharyltransferase (OST) complex.

The protein resides in the endoplasmic reticulum membrane. It functions in the pathway protein modification; protein glycosylation. Functionally, subunit of the oligosaccharyl transferase (OST) complex that catalyzes the initial transfer of a defined glycan (Glc(3)Man(9)GlcNAc(2) in eukaryotes) from the lipid carrier dolichol-pyrophosphate to an asparagine residue within an Asn-X-Ser/Thr consensus motif in nascent polypeptide chains, the first step in protein N-glycosylation. N-glycosylation occurs cotranslationally and the complex associates with the Sec61 complex at the channel-forming translocon complex that mediates protein translocation across the endoplasmic reticulum (ER). All subunits are required for a maximal enzyme activity. The sequence is that of Dolichyl-diphosphooligosaccharide--protein glycosyltransferase 48 kDa subunit (OST48) from Arabidopsis thaliana (Mouse-ear cress).